We begin with the raw amino-acid sequence, 841 residues long: Translation initiation factor IF-2 (841 aa).

Basic and acidic residues-rich tracts occupy residues 1-12 (MSDNEIKNEAPK), 52-92 (ALKA…EATK), 114-170 (EQPK…REEA), 188-202 (READRDNDRRSEANR), and 213-235 (KKGDREDKNERNADRRNQKDVKG). 2 disordered regions span residues 1–24 (MSDNEIKNEAPKKLSLQRRTKTTV) and 52–246 (ALKA…GSAL). The 171-residue stretch at 340–510 (TRAPVVTIMG…LLQSEVLELT (171 aa)) folds into the tr-type G domain. Residues 349–356 (GHVDHGKT) form a G1 region. 349–356 (GHVDHGKT) provides a ligand contact to GTP. The tract at residues 374–378 (GITQH) is G2. A G3 region spans residues 396–399 (DTPG). GTP-binding positions include 396–400 (DTPGH) and 450–453 (NKID). A G4 region spans residues 450-453 (NKID). The segment at 486–488 (SAK) is G5.

Belongs to the TRAFAC class translation factor GTPase superfamily. Classic translation factor GTPase family. IF-2 subfamily.

The protein localises to the cytoplasm. Functionally, one of the essential components for the initiation of protein synthesis. Protects formylmethionyl-tRNA from spontaneous hydrolysis and promotes its binding to the 30S ribosomal subunits. Also involved in the hydrolysis of GTP during the formation of the 70S ribosomal complex. This chain is Translation initiation factor IF-2, found in Actinobacillus pleuropneumoniae serotype 5b (strain L20).